Here is a 119-residue protein sequence, read N- to C-terminus: Acidic phospholipase A2 DE-II (119 aa).

7 disulfide bridges follow: Cys-11/Cys-72, Cys-26/Cys-118, Cys-28/Cys-44, Cys-43/Cys-99, Cys-50/Cys-92, Cys-60/Cys-85, and Cys-79/Cys-90. Ca(2+) is bound by residues Tyr-27, Gly-29, and Gly-31. Residue His-47 is part of the active site. Asp-48 provides a ligand contact to Ca(2+). Asp-93 is an active-site residue.

The protein belongs to the phospholipase A2 family. Group I subfamily. D49 sub-subfamily. It depends on Ca(2+) as a cofactor. In terms of tissue distribution, expressed by the venom gland.

The protein resides in the secreted. It carries out the reaction a 1,2-diacyl-sn-glycero-3-phosphocholine + H2O = a 1-acyl-sn-glycero-3-phosphocholine + a fatty acid + H(+). PLA2 catalyzes the calcium-dependent hydrolysis of the 2-acyl groups in 3-sn-phosphoglycerides. In Naja melanoleuca (Forest cobra), this protein is Acidic phospholipase A2 DE-II.